The sequence spans 305 residues: uncharacterized protein (305 aa).

The interval 208 to 236 is disordered; that stretch reads SYAQSPAVKKKKWRHSGGKKNNPRENHID. Residues 215–225 show a composition bias toward basic residues; sequence VKKKKWRHSGG.

This is an uncharacterized protein from Bacillus subtilis (strain 168).